A 672-amino-acid chain; its full sequence is Methionine--tRNA ligase (672 aa).

Residues 12–22 carry the 'HIGH' region motif; sequence AYTNGPLHLGH. 4 residues coordinate Zn(2+): Cys-144, Cys-147, Cys-156, and Cys-159. The 'KMSKS' region motif lies at 330-334; the sequence is KMSTS. Thr-333 serves as a coordination point for ATP. The tRNA-binding domain maps to 573–672; that stretch reads DFAKIELKVA…KDLPVGSTIC (100 aa).

It belongs to the class-I aminoacyl-tRNA synthetase family. MetG type 1 subfamily. Homodimer. The cofactor is Zn(2+).

Its subcellular location is the cytoplasm. The catalysed reaction is tRNA(Met) + L-methionine + ATP = L-methionyl-tRNA(Met) + AMP + diphosphate. Functionally, is required not only for elongation of protein synthesis but also for the initiation of all mRNA translation through initiator tRNA(fMet) aminoacylation. This Methanococcus aeolicus (strain ATCC BAA-1280 / DSM 17508 / OCM 812 / Nankai-3) protein is Methionine--tRNA ligase.